A 510-amino-acid polypeptide reads, in one-letter code: Inositol-3-phosphate synthase (510 aa).

Positions 70, 71, 72, 73, 143, 180, 190, 193, 230, 231, 232, 233, 281, 282, 306, 309, 340, 341, 342, 355, 393, 394, 422, and 423 each coordinate NAD(+).

Belongs to the myo-inositol 1-phosphate synthase family. The cofactor is NAD(+).

The protein resides in the cytoplasm. The protein localises to the cytosol. Its subcellular location is the nucleus. It catalyses the reaction D-glucose 6-phosphate = 1D-myo-inositol 3-phosphate. Its pathway is polyol metabolism; myo-inositol biosynthesis; myo-inositol from D-glucose 6-phosphate: step 1/2. Its function is as follows. Key enzyme in myo-inositol biosynthesis pathway that catalyzes the conversion of glucose 6-phosphate to 1-myo-inositol 1-phosphate in a NAD-dependent manner. The sequence is that of Inositol-3-phosphate synthase from Zea mays (Maize).